The chain runs to 572 residues: Hemolysin-1 (572 aa).

Bacterial hemolysins are exotoxins that attack blood cell membranes and cause cell rupture by mechanisms not clearly defined. This is Hemolysin-1 (ash1) from Aeromonas salmonicida.